The chain runs to 633 residues: Lysophospholipase 1 (633 aa).

The N-terminal stretch at 1–20 (MKTTTVACAVAGLLFSCVSG) is a signal peptide. A PLA2c domain is found at 47–594 (GCPASRPTIR…QRYCWDGSLN (548 aa)). Asparagine 64, asparagine 104, asparagine 139, asparagine 173, asparagine 246, asparagine 290, asparagine 329, asparagine 358, asparagine 397, asparagine 450, asparagine 463, asparagine 469, asparagine 497, asparagine 500, asparagine 521, asparagine 549, asparagine 555, and asparagine 594 each carry an N-linked (GlcNAc...) asparagine glycan. Serine 609 is lipidated: GPI-like-anchor amidated serine. A propeptide spans 610–633 (AASGIIPSISTVAMAVVFAAWTIF) (removed in mature form).

The protein belongs to the lysophospholipase family. In terms of processing, the GPI-like anchor contains a phosphoceramide lipid group. The anchor position has not been determined.

It is found in the cell membrane. The catalysed reaction is a 1-acyl-sn-glycero-3-phosphocholine + H2O = sn-glycerol 3-phosphocholine + a fatty acid + H(+). In terms of biological role, catalyzes the release of fatty acids from lysophospholipids. The polypeptide is Lysophospholipase 1 (plb1) (Aspergillus fumigatus (strain CBS 144.89 / FGSC A1163 / CEA10) (Neosartorya fumigata)).